Reading from the N-terminus, the 388-residue chain is Processive diacylglycerol beta-glucosyltransferase (388 aa).

The protein belongs to the glycosyltransferase 28 family. UgtP subfamily.

The protein localises to the cell membrane. It carries out the reaction a 1,2-diacyl-3-O-(beta-D-glucopyranosyl)-sn-glycerol + UDP-alpha-D-glucose = a 1,2-diacyl-3-O-(beta-D-Glc-(1-&gt;6)-beta-D-Glc)-sn-glycerol + UDP + H(+). The enzyme catalyses a 1,2-diacyl-3-O-(beta-D-Glc-(1-&gt;6)-beta-D-Glc)-sn-glycerol + UDP-alpha-D-glucose = a 1,2-diacyl-3-O-(beta-D-Glc-(1-&gt;6)-beta-D-Glc-(1-&gt;6)-beta-D-Glc)-sn-glycerol + UDP + H(+). It catalyses the reaction a 1,2-diacyl-sn-glycerol + UDP-alpha-D-glucose = a 1,2-diacyl-3-O-(beta-D-glucopyranosyl)-sn-glycerol + UDP + H(+). It functions in the pathway glycolipid metabolism; diglucosyl-diacylglycerol biosynthesis. In terms of biological role, processive glucosyltransferase involved in the biosynthesis of both the bilayer- and non-bilayer-forming membrane glucolipids. Is able to successively transfer up to three glucosyl residues to diacylglycerol (DAG), thereby catalyzing the formation of beta-monoglucosyl-DAG (3-O-(beta-D-glucopyranosyl)-1,2-diacyl-sn-glycerol), beta-diglucosyl-DAG (3-O-(beta-D-glucopyranosyl-beta-(1-&gt;6)-D-glucopyranosyl)-1,2-diacyl-sn-glycerol) and beta-triglucosyl-DAG (3-O-(beta-D-glucopyranosyl-beta-(1-&gt;6)-D-glucopyranosyl-beta-(1-&gt;6)-D-glucopyranosyl)-1,2-diacyl-sn-glycerol). Beta-diglucosyl-DAG is the predominant glycolipid found in Bacillales and is also used as a membrane anchor for lipoteichoic acid (LTA). The chain is Processive diacylglycerol beta-glucosyltransferase from Bacillus anthracis (strain A0248).